A 223-amino-acid polypeptide reads, in one-letter code: Deoxyribose-phosphate aldolase (223 aa).

Asp-92 acts as the Proton donor/acceptor in catalysis. Lys-154 (schiff-base intermediate with acetaldehyde) is an active-site residue. Lys-182 serves as the catalytic Proton donor/acceptor.

This sequence belongs to the DeoC/FbaB aldolase family. DeoC type 1 subfamily.

The protein localises to the cytoplasm. It catalyses the reaction 2-deoxy-D-ribose 5-phosphate = D-glyceraldehyde 3-phosphate + acetaldehyde. It functions in the pathway carbohydrate degradation; 2-deoxy-D-ribose 1-phosphate degradation; D-glyceraldehyde 3-phosphate and acetaldehyde from 2-deoxy-alpha-D-ribose 1-phosphate: step 2/2. Catalyzes a reversible aldol reaction between acetaldehyde and D-glyceraldehyde 3-phosphate to generate 2-deoxy-D-ribose 5-phosphate. The polypeptide is Deoxyribose-phosphate aldolase (Haemophilus influenzae (strain 86-028NP)).